A 297-amino-acid polypeptide reads, in one-letter code: Elongation factor Ts (297 aa).

The tract at residues 82-85 is involved in Mg(2+) ion dislocation from EF-Tu; it reads TDFV.

This sequence belongs to the EF-Ts family.

The protein resides in the cytoplasm. Associates with the EF-Tu.GDP complex and induces the exchange of GDP to GTP. It remains bound to the aminoacyl-tRNA.EF-Tu.GTP complex up to the GTP hydrolysis stage on the ribosome. The chain is Elongation factor Ts from Azoarcus sp. (strain BH72).